The following is an 84-amino-acid chain: Transmembrane protein EP84R (84 aa).

2 consecutive transmembrane segments (helical) span residues 31 to 51 (VIGV…IIIL) and 60 to 80 (AASI…FLIY).

This sequence belongs to the asfivirus EP84R family.

It is found in the virion membrane. This Ornithodoros (relapsing fever ticks) protein is Transmembrane protein EP84R.